We begin with the raw amino-acid sequence, 637 residues long: Tumor protein p73 (637 aa).

A transactivation region spans residues 1 to 46 (MAQSTTTSPDGGTTFEHLWSSLEPDSTYFDLPQSSRGNNEVVGGTD). T27 is subject to Phosphothreonine. Y28 carries the phosphotyrosine; by SRC and HCK modification. The interval 78 to 104 (RAASASPYTPEHAASVPTHSPYAQPSS) is disordered. Positions 94–104 (PTHSPYAQPSS) are enriched in polar residues. Y99 carries the phosphotyrosine modification. Residues 131–310 (FQQSSTAKSA…DRKADEDHYR (180 aa)) are DNA-binding. Zn(2+) contacts are provided by C194, H197, C258, and C262. Residues 301–311 (DRKADEDHYRE) are compositionally biased toward basic and acidic residues. Residues 301 to 351 (DRKADEDHYREQQALNESSAKNGAASKRAFKQSPPAVPALGPGVKKRRHGD) form a disordered region. The tract at residues 345–380 (KKRRHGDEDTYYLQVRGRENFEILMKLKESLELMEL) is interaction with HIPK2. Residues 345–386 (KKRRHGDEDTYYLQVRGRENFEILMKLKESLELMELVPQPLV) are oligomerization. A PPxY motif motif is present at residues 483-487 (PPPPY). In terms of domain architecture, SAM spans 485 to 551 (PPYHADPSLV…WRGLQDLKQG (67 aa)). K628 is covalently cross-linked (Glycyl lysine isopeptide (Lys-Gly) (interchain with G-Cter in SUMO); in isoform Alpha). A Glycyl lysine isopeptide (Lys-Gly) (interchain with G-Cter in SUMO2) cross-link involves residue K628.

The protein belongs to the p53 family. Found in a complex with p53/TP53 and CABLES1. The C-terminal oligomerization domain binds to the ABL1 tyrosine kinase SH3 domain. Interacts with HECW2. Isoforms Alpha and Beta interact with HIPK2. Isoform Alpha interacts with RANBP9. Interacts with WWOX. Isoform Beta interacts homotypically and with p53, whereas isoform Alpha does not. Interacts (via SAM domain) with FBXO45 (via B30.2/SPRY domain). Interacts with YAP1 (phosphorylated form). Interacts with HCK (via SH3 domain); this inhibits TP73 activity and degradation. Requires Zn(2+) as cofactor. Post-translationally, isoform Alpha (but not isoform Beta) is sumoylated on Lys-628, which potentiates proteasomal degradation but does not affect transcriptional activity. Polyubiquitinated by RCHY1/PIRH2; leading to its degradation by the proteasome.

Its subcellular location is the nucleus. The protein localises to the cytoplasm. In terms of biological role, participates in the apoptotic response to DNA damage. May be a tumor suppressor protein. Is an activator of FOXJ1 expression, essential for the positive regulation of lung ciliated cell differentiation. The polypeptide is Tumor protein p73 (TP73) (Chlorocebus aethiops (Green monkey)).